The following is a 1692-amino-acid chain: Protein TOPAZ1 (1692 aa).

3 disordered regions span residues 1-135, 600-629, and 894-919; these read MRRP…PGLD, ELSRRGSEVISNTTEDTQLTSETQSLTGNK, and EPNVAGEHQSTDSKYMETPVKKEPSD. The segment covering 31-40 has biased composition (gly residues); it reads GAAGGCGPEA. The span at 95 to 116 shows a compositional bias: basic and acidic residues; the sequence is SDPRGLEAAKEAELPLQTERHT. Over residues 608–627 the composition is skewed to polar residues; that stretch reads VISNTTEDTQLTSETQSLTG. The span at 902–919 shows a compositional bias: basic and acidic residues; the sequence is QSTDSKYMETPVKKEPSD.

Its subcellular location is the cytoplasm. The protein localises to the cytosol. Functionally, important for normal spermatogenesis and male fertility. Specifically required for progression to the post-meiotic stages of spermatocyte development. Seems to be necessary for normal expression levels of a number of testis-expressed gene transcripts, although its role in this process is unclear. The polypeptide is Protein TOPAZ1 (TOPAZ1) (Homo sapiens (Human)).